Here is a 371-residue protein sequence, read N- to C-terminus: Probable F-box protein At1g65740 (371 aa).

Residues 2–49 form the F-box domain; it reads VDWSTLPEELLHFIAARSFSLVEYKRFSSICVSWHSSVSGVKKNPFHR.

The sequence is that of Probable F-box protein At1g65740 from Arabidopsis thaliana (Mouse-ear cress).